The sequence spans 336 residues: Protein SGT1 homolog (336 aa).

A2 carries the N-acetylalanine modification. 3 TPR repeats span residues 11-44 (SQRL…NPDD), 45-78 (AQYY…NPNN), and 79-112 (CTAL…DSTD). Residues 140-229 (QSKIKYDWYQ…PEAVRWEKLE (90 aa)) form the CS domain. T236 is modified (phosphothreonine). The SGS domain maps to 247-336 (MYPSSSHYTR…PPDDMEWKQY (90 aa)). The residue at position 252 (S252) is a Phosphoserine. T255 carries the post-translational modification Phosphothreonine. A Glycyl lysine isopeptide (Lys-Gly) (interchain with G-Cter in SUMO1); alternate cross-link involves residue K266. K266 is covalently cross-linked (Glycyl lysine isopeptide (Lys-Gly) (interchain with G-Cter in SUMO2); alternate). A Phosphoserine modification is found at S302.

Belongs to the SGT1 family. Probably associates with SCF (SKP1-CUL1-F-box protein) complex through interaction with SKP1. Interacts with S100A6. Interacts with HSP90. Post-translationally, phosphorylated at Ser-252 and Ser-302, dephosphorylation promotes nuclear translocation, most likely due to disruption of the SUGT1-HSP90 complex.

The protein localises to the cytoplasm. Its subcellular location is the nucleus. May play a role in ubiquitination and subsequent proteasomal degradation of target proteins. The chain is Protein SGT1 homolog from Mus musculus (Mouse).